Consider the following 623-residue polypeptide: Glutamine--fructose-6-phosphate aminotransferase [isomerizing] (623 aa).

Residue Cys2 is the Nucleophile; for GATase activity of the active site. Residues 2–228 (CGIVGYIGQA…NDQVVTITAD (227 aa)) form the Glutamine amidotransferase type-2 domain. SIS domains follow at residues 295 to 435 (IDEA…LRGN) and 468 to 613 (LGQD…VDQP). The active-site For Fru-6P isomerization activity is the Lys618.

As to quaternary structure, homodimer.

Its subcellular location is the cytoplasm. The enzyme catalyses D-fructose 6-phosphate + L-glutamine = D-glucosamine 6-phosphate + L-glutamate. Its function is as follows. Catalyzes the first step in hexosamine metabolism, converting fructose-6P into glucosamine-6P using glutamine as a nitrogen source. The sequence is that of Glutamine--fructose-6-phosphate aminotransferase [isomerizing] from Corynebacterium glutamicum (strain ATCC 13032 / DSM 20300 / JCM 1318 / BCRC 11384 / CCUG 27702 / LMG 3730 / NBRC 12168 / NCIMB 10025 / NRRL B-2784 / 534).